The sequence spans 165 residues: MSGSIDQLSHLDAAGRARMVDVGNKAVTAREAIARGRVVMQPATLQLIVSGGMPKGDVLAVARVAGIMAAKRTAELIPLCHLLNLSHASVNFTPDPAGNALEIEATVRCTGQTGVEMEALTAVSIAALTIYDMCKAVDKTMQIDGIRLIAKRGGRSGDWQREESA.

Residues 79–81 and 117–118 each bind substrate; these read LCH and ME. Residue Asp-132 is part of the active site.

It belongs to the MoaC family. As to quaternary structure, homohexamer; trimer of dimers.

The enzyme catalyses (8S)-3',8-cyclo-7,8-dihydroguanosine 5'-triphosphate = cyclic pyranopterin phosphate + diphosphate. It functions in the pathway cofactor biosynthesis; molybdopterin biosynthesis. Catalyzes the conversion of (8S)-3',8-cyclo-7,8-dihydroguanosine 5'-triphosphate to cyclic pyranopterin monophosphate (cPMP). The polypeptide is Cyclic pyranopterin monophosphate synthase (Chloroflexus aggregans (strain MD-66 / DSM 9485)).